A 179-amino-acid chain; its full sequence is Apoptosis regulator Bcl-2 homolog (179 aa).

The short motif at 76–95 is the BH1 element; sequence ELFKDLINWGRICGFIVFSA. The BH2 signature appears at 126–141; the sequence is PWMISHGGQEEFLAFS.

The protein belongs to the Bcl-2 family. Interacts with host BECN1 (via BH3 homology domain); this interaction allows the virus to inhibit BECN1, and thus autophagy. Interacts with host BID. Interacts with host BAX.

It localises to the host mitochondrion. It is found in the host endoplasmic reticulum. In terms of biological role, suppresses apoptosis in host cell to promote the viral replication. Has the ability to potentially bind to all the members of the proapoptotic Bcl-2 family. Inhibits autophagy by interacting with host Beclin 1 (BECN1). The chain is Apoptosis regulator Bcl-2 homolog from African swine fever virus (isolate Pig/Kenya/KEN-50/1950) (ASFV).